Reading from the N-terminus, the 366-residue chain is 3-isopropylmalate dehydrogenase (366 aa).

77-90 is a binding site for NAD(+); it reads GPKWDDNPPHLRPE. Positions 97, 107, 135, and 223 each coordinate substrate. Mg(2+)-binding residues include D223, D246, and D250. Position 280-292 (280-292) interacts with NAD(+); the sequence is GSAPDIAGMNKAN.

This sequence belongs to the isocitrate and isopropylmalate dehydrogenases family. LeuB type 1 subfamily. As to quaternary structure, homodimer. The cofactor is Mg(2+). Requires Mn(2+) as cofactor.

The protein resides in the cytoplasm. It catalyses the reaction (2R,3S)-3-isopropylmalate + NAD(+) = 4-methyl-2-oxopentanoate + CO2 + NADH. It participates in amino-acid biosynthesis; L-leucine biosynthesis; L-leucine from 3-methyl-2-oxobutanoate: step 3/4. Its function is as follows. Catalyzes the oxidation of 3-carboxy-2-hydroxy-4-methylpentanoate (3-isopropylmalate) to 3-carboxy-4-methyl-2-oxopentanoate. The product decarboxylates to 4-methyl-2 oxopentanoate. This is 3-isopropylmalate dehydrogenase (leuB) from Bacillus caldotenax.